The chain runs to 151 residues: Myosin light polypeptide 6 (151 aa).

Position 2 is an N-acetylcysteine (Cys-2). One can recognise an EF-hand 1 domain in the interval 7 to 42; it reads DQTAEFKEAFQLFDRTGDGKILYSQCGDVMRALGQN. Ser-57 is modified (phosphoserine). N6-acetyllysine is present on Lys-81. EF-hand domains are found at residues 84 to 119 and 119 to 151; these read GTYE…LGEK and KMTE…VLNG.

In terms of assembly, myosin is a hexamer of 2 heavy chains and 4 light chains. Interacts with SPATA6.

Its function is as follows. Regulatory light chain of myosin. Does not bind calcium. This Rattus norvegicus (Rat) protein is Myosin light polypeptide 6 (Myl6).